The chain runs to 114 residues: Cuticle protein CP1158 (114 aa).

Position 1 is a pyrrolidone carboxylic acid (Gln1). Tandem repeats lie at residues 1–17 (QVGY…NIQF), 26–43 (VLKG…NLQL), 70–87 (SVVG…VQFS), and 95–112 (VLVG…NLQL).

As to expression, calcified shell.

This is Cuticle protein CP1158 from Cancer pagurus (Rock crab).